Here is a 389-residue protein sequence, read N- to C-terminus: Alanine racemase (389 aa).

The active-site Proton acceptor; specific for D-alanine is Lys46. Lys46 carries the N6-(pyridoxal phosphate)lysine modification. Residue Arg144 participates in substrate binding. Tyr275 acts as the Proton acceptor; specific for L-alanine in catalysis. Met323 is a binding site for substrate.

This sequence belongs to the alanine racemase family. Pyridoxal 5'-phosphate is required as a cofactor.

The catalysed reaction is L-alanine = D-alanine. The protein operates within amino-acid biosynthesis; D-alanine biosynthesis; D-alanine from L-alanine: step 1/1. Catalyzes the interconversion of L-alanine and D-alanine. May also act on other amino acids. The chain is Alanine racemase (alr) from Mycolicibacterium smegmatis (strain ATCC 700084 / mc(2)155) (Mycobacterium smegmatis).